A 238-amino-acid polypeptide reads, in one-letter code: MATPHINAEMGDFADVVLMPGDPLRAQYIAETFLEDARQVNNVRGMLGFTGTYKGRRISVMGHGMGIPSCSIYAKELITEFGVKKIIRIGSCGAVSEDVKIRDVVIGMGACTDSKVNRMRFKDHDFAAIADFDLVRHAVDAAKAKNINTRVGNIFSVDLFYSPDPQMFDVMEKYGILGVEMEAAGIYGVAAEFGAKALAICTVSDHIRTGEQTTAEERQHTFNDMIEIALESILLGDN.

H5 is an a purine D-ribonucleoside binding site. Phosphate is bound by residues G21, R25, R44, and 88-91; that span reads RIGS. Residues 180–182 and 204–205 each bind a purine D-ribonucleoside; these read EME and SD. Residue D205 is the Proton donor of the active site.

It belongs to the PNP/UDP phosphorylase family. As to quaternary structure, homohexamer; trimer of homodimers.

It carries out the reaction a purine D-ribonucleoside + phosphate = a purine nucleobase + alpha-D-ribose 1-phosphate. The catalysed reaction is a purine 2'-deoxy-D-ribonucleoside + phosphate = a purine nucleobase + 2-deoxy-alpha-D-ribose 1-phosphate. In terms of biological role, catalyzes the reversible phosphorolytic breakdown of the N-glycosidic bond in the beta-(deoxy)ribonucleoside molecules, with the formation of the corresponding free purine bases and pentose-1-phosphate. The protein is Purine nucleoside phosphorylase DeoD-type of Xenorhabdus nematophila (strain ATCC 19061 / DSM 3370 / CCUG 14189 / LMG 1036 / NCIMB 9965 / AN6).